Reading from the N-terminus, the 421-residue chain is Gamma-glutamyl phosphate reductase (421 aa).

Belongs to the gamma-glutamyl phosphate reductase family.

The protein localises to the cytoplasm. It catalyses the reaction L-glutamate 5-semialdehyde + phosphate + NADP(+) = L-glutamyl 5-phosphate + NADPH + H(+). The protein operates within amino-acid biosynthesis; L-proline biosynthesis; L-glutamate 5-semialdehyde from L-glutamate: step 2/2. Catalyzes the NADPH-dependent reduction of L-glutamate 5-phosphate into L-glutamate 5-semialdehyde and phosphate. The product spontaneously undergoes cyclization to form 1-pyrroline-5-carboxylate. This Pseudomonas fluorescens (strain ATCC BAA-477 / NRRL B-23932 / Pf-5) protein is Gamma-glutamyl phosphate reductase.